The following is a 370-amino-acid chain: Peridinin-chlorophyll a-binding protein 1, chloroplastic (370 aa).

The transit peptide at 1–57 directs the protein to the chloroplast; that stretch reads MVRSGKKAVVLAAVAFCATSVVQKSHGFVPSPLRQRAAAAGAAAASAATMFAPAAFA. Tandem repeats lie at residues 58–220 and 221–370.

In terms of assembly, homotrimer.

The protein resides in the plastid. It localises to the chloroplast. In terms of biological role, water-soluble antenna for capture of solar energy in the blue-green range. Peridinin is an asymmetric carotenoid. This chain is Peridinin-chlorophyll a-binding protein 1, chloroplastic, found in Amphidinium carterae (Dinoflagellate).